Consider the following 90-residue polypeptide: Protein PRAC2 (90 aa).

As to expression, highly expressed in prostate and testis. Also detected in placenta, muscle, colon, peripheral blood leukocytes and skin.

The protein localises to the nucleus. The sequence is that of Protein PRAC2 from Homo sapiens (Human).